The primary structure comprises 438 residues: Serine--tRNA ligase (438 aa).

243-245 provides a ligand contact to L-serine; the sequence is TAE. 274-276 is a binding site for ATP; the sequence is RSE. E297 provides a ligand contact to L-serine. Residue 361-364 participates in ATP binding; sequence EISS. Residue S396 participates in L-serine binding.

The protein belongs to the class-II aminoacyl-tRNA synthetase family. Type-1 seryl-tRNA synthetase subfamily. In terms of assembly, homodimer. The tRNA molecule binds across the dimer.

It localises to the cytoplasm. It carries out the reaction tRNA(Ser) + L-serine + ATP = L-seryl-tRNA(Ser) + AMP + diphosphate + H(+). The catalysed reaction is tRNA(Sec) + L-serine + ATP = L-seryl-tRNA(Sec) + AMP + diphosphate + H(+). It participates in aminoacyl-tRNA biosynthesis; selenocysteinyl-tRNA(Sec) biosynthesis; L-seryl-tRNA(Sec) from L-serine and tRNA(Sec): step 1/1. Its function is as follows. Catalyzes the attachment of serine to tRNA(Ser). Is also able to aminoacylate tRNA(Sec) with serine, to form the misacylated tRNA L-seryl-tRNA(Sec), which will be further converted into selenocysteinyl-tRNA(Sec). The chain is Serine--tRNA ligase from Ralstonia pickettii (strain 12J).